The chain runs to 548 residues: Membrane protein insertase YidC (548 aa).

A helical transmembrane segment spans residues 6–26 (NLLVIALLFVSFMIWQAWEQD). The segment at 28–55 (NPQPQAQQTTQTTTTAAGSAADQGVPAS) is disordered. Residues 30–50 (QPQAQQTTQTTTTAAGSAADQ) are compositionally biased toward low complexity. The next 4 helical transmembrane spans lie at 350-370 (FVGN…GIMY), 420-440 (LGGC…YYML), 458-478 (LSAQ…MFFI), and 499-519 (PVIF…YYIV).

Belongs to the OXA1/ALB3/YidC family. Type 1 subfamily. As to quaternary structure, interacts with the Sec translocase complex via SecD. Specifically interacts with transmembrane segments of nascent integral membrane proteins during membrane integration.

The protein resides in the cell inner membrane. Required for the insertion and/or proper folding and/or complex formation of integral membrane proteins into the membrane. Involved in integration of membrane proteins that insert both dependently and independently of the Sec translocase complex, as well as at least some lipoproteins. Aids folding of multispanning membrane proteins. This is Membrane protein insertase YidC from Escherichia fergusonii (strain ATCC 35469 / DSM 13698 / CCUG 18766 / IAM 14443 / JCM 21226 / LMG 7866 / NBRC 102419 / NCTC 12128 / CDC 0568-73).